Consider the following 348-residue polypeptide: Uroporphyrinogen decarboxylase (348 aa).

Substrate-binding positions include 27-31, phenylalanine 46, aspartate 76, tyrosine 152, serine 207, and histidine 320; that span reads RQAGR.

It belongs to the uroporphyrinogen decarboxylase family. As to quaternary structure, homodimer.

It localises to the cytoplasm. It carries out the reaction uroporphyrinogen III + 4 H(+) = coproporphyrinogen III + 4 CO2. It functions in the pathway porphyrin-containing compound metabolism; protoporphyrin-IX biosynthesis; coproporphyrinogen-III from 5-aminolevulinate: step 4/4. Its function is as follows. Catalyzes the decarboxylation of four acetate groups of uroporphyrinogen-III to yield coproporphyrinogen-III. The polypeptide is Uroporphyrinogen decarboxylase (Bacillus cereus (strain G9842)).